A 274-amino-acid chain; its full sequence is Large ribosomal subunit protein uL2cz/uL2cy (274 aa).

Disordered stretches follow at residues 1-21 and 225-254; these read MAIH…VDSQ and PVDH…PALG.

This sequence belongs to the universal ribosomal protein uL2 family. As to quaternary structure, part of the 50S ribosomal subunit.

The protein localises to the plastid. Its subcellular location is the chloroplast. The sequence is that of Large ribosomal subunit protein uL2cz/uL2cy (rpl2-A) from Draba nemorosa (Woodland whitlowgrass).